The following is an 809-amino-acid chain: Carbon monoxide dehydrogenase large chain (809 aa).

Cys388 is a Cu(+) binding site. Glu763 is a binding site for Mo-molybdopterin cytosine dinucleotide.

In terms of assembly, dimer of heterotrimers. Each heterotrimer consists of a large, a medium and a small subunit. It depends on Cu(+) as a cofactor. The cofactor is Mo-molybdopterin cytosine dinucleotide.

It catalyses the reaction CO + a quinone + H2O = a quinol + CO2. In terms of biological role, catalyzes the oxidation of carbon monoxide to carbon dioxide. The polypeptide is Carbon monoxide dehydrogenase large chain (coxL) (Afipia carboxidovorans (strain ATCC 49405 / DSM 1227 / KCTC 32145 / OM5) (Oligotropha carboxidovorans)).